We begin with the raw amino-acid sequence, 460 residues long: Protein unc-93 homolog A (460 aa).

5 consecutive transmembrane segments (helical) span residues 7–27 (ILIVSFGFLLLFTAFGGLQSL), 41–61 (SLSVIYAALIVSSVFVPPIVI), 68–88 (WTIVASMCCYITYSLGNFYAS), 89–109 (WYTLIPTSLILGFGGAPLWAA), and 139–159 (LFFLIFQSSGVWGNLISSLIF). Residues Asn-168 and Asn-189 are each glycosylated (N-linked (GlcNAc...) asparagine). Transmembrane regions (helical) follow at residues 203 to 223 (TLLGVYTGSGVLAVILIAVFL), 292 to 312 (FVGYVMICFAATNAVCSLLFG), 321 to 341 (ICLFILAAVSNAACVIALLLW), 345 to 365 (PNDFAVFFIFPAIWGMADAIW), 390 to 410 (LWESLGFVIAYGYSTFLCVSV), and 412 to 432 (LYILLAVLLIAIVFYGFVEYL).

Belongs to the unc-93 family.

The protein localises to the membrane. The chain is Protein unc-93 homolog A (unc93a) from Xenopus laevis (African clawed frog).